A 233-amino-acid polypeptide reads, in one-letter code: MRHNIKFKSKGTLKIRNTAQISLWKKCSDSMIADQTYLFINRVQDRRFDEESLRILELSLVAMNVKSFLEVRSRLRDFMRSESVVIFGELTGESMVAKLSVLEFFARAFALLGDMESCLAMRYEALNLRQLKSPSCLWLGVSHSEWTKFAVQSMENGFPSIAGKASENALLSLKKDSLIEPKSEDNSDILDAAEKVRRLRDSAASLTSSHSGIFIYIVSSLKFAVCNRLLTTF.

In terms of assembly, interacts with PRD1; this interaction facilitates a binding to PRD3. Specifically expressed in buds.

In terms of biological role, required for meiotic double-strand break (DSB) formation, the initial event for meiotic recombination. This chain is Protein DOUBLE-STRAND BREAK FORMATION, found in Arabidopsis thaliana (Mouse-ear cress).